A 940-amino-acid chain; its full sequence is Lysine-specific demethylase 7A (940 aa).

A PHD-type zinc finger spans residues 37 to 88 (PVYCVCRQPYDVNRFMIECDVCKDWFHGSCVGVEEHHAVDIDLYHCPDCAAL). The tract at residues 97–114 (RRNWHRHDYTEVDDGSKP) is linker. The JmjC domain maps to 230 to 386 (FSDTKMSELV…MQLRCYEMEK (157 aa)). A substrate-binding site is contributed by T279. Positions 282 and 284 each coordinate Fe cation. Residue K299 participates in substrate binding. Residue H354 coordinates Fe cation. Disordered regions lie at residues 483–509 (VKSQ…HSRR), 599–670 (LYTA…PDCT), 710–729 (SQKP…TSTS), 818–854 (NAQD…SSSI), and 876–920 (SPER…MATA). Residue S604 is modified to Phosphoserine. A compositionally biased stretch (polar residues) spans 613-623 (TQNANMKTEQS). Positions 714–724 (SRQEIPVKREC) are enriched in basic and acidic residues.

This sequence belongs to the JHDM1 histone demethylase family. JHDM1D subfamily. Requires Fe(2+) as cofactor.

The protein resides in the nucleus. It carries out the reaction N(6),N(6)-dimethyl-L-lysyl(9)-[histone H3] + 2 2-oxoglutarate + 2 O2 = L-lysyl(9)-[histone H3] + 2 formaldehyde + 2 succinate + 2 CO2. It catalyses the reaction N(6),N(6)-dimethyl-L-lysyl(27)-[histone H3] + 2 2-oxoglutarate + 2 O2 = L-lysyl(27)-[histone H3] + 2 formaldehyde + 2 succinate + 2 CO2. The catalysed reaction is N(6),N(6)-dimethyl-L-lysyl(36)-[histone H3] + 2-oxoglutarate + O2 = N(6)-methyl-L-lysyl(36)-[histone H3] + formaldehyde + succinate + CO2. The enzyme catalyses N(6)-methyl-L-lysyl(20)-[histone H4] + 2-oxoglutarate + O2 = L-lysyl(20)-[histone H4] + formaldehyde + succinate + CO2. Histone demethylase required for brain development. Specifically demethylates dimethylated 'Lys-9', 'Lys-27' and 'Lys-36' (H3K9me2, H3K27me2, H3K36me2, respectively) of histone H3 and monomethylated histone H4 'Lys-20' residue (H4K20Me1), thereby playing a central role in histone code. Specifically binds trimethylated 'Lys-4' of histone H3 (H3K4me3), affecting histone demethylase specificity: in presence of H3K4me3, it has no demethylase activity toward H3K9me2, while it has high activity toward H3K27me2. Demethylates H3K9me2 in absence of H3K4me3. Has activity toward H4K20Me1 only when nucleosome is used as a substrate and when not histone octamer is used as substrate. This chain is Lysine-specific demethylase 7A (Kdm7a), found in Mus musculus (Mouse).